We begin with the raw amino-acid sequence, 82 residues long: Small ribosomal subunit protein bS16 (82 aa).

This sequence belongs to the bacterial ribosomal protein bS16 family.

The chain is Small ribosomal subunit protein bS16 from Vibrio campbellii (strain ATCC BAA-1116).